Here is an 83-residue protein sequence, read N- to C-terminus: Small ribosomal subunit protein bS16 (83 aa).

Belongs to the bacterial ribosomal protein bS16 family.

The polypeptide is Small ribosomal subunit protein bS16 (Pseudomonas entomophila (strain L48)).